Here is a 148-residue protein sequence, read N- to C-terminus: MLIVYFSSATDNTHRFVQKLDLPNVRIPLTRVEEPLKINEPYVLITPTYGGGVSMTGENSRPVPPQVIRFLNDEHNRSFIRAVVAGGNSNFGSDFGLAGEIISKKCKVPYVYRFELMGNEEDVSILRGGLTQNAQALGLEPQEPVTSR.

This sequence belongs to the NrdI family.

Functionally, probably involved in ribonucleotide reductase function. The polypeptide is Protein NrdI (Corynebacterium glutamicum (strain R)).